The following is a 350-amino-acid chain: NADH-cytochrome b5 reductase 2 (350 aa).

Residues 43 to 63 (PLVLALGGVAGIGAWYGLGGF) traverse the membrane as a helical segment. Residues 96–204 (DQFVEFTLKE…KGPIAKFAYK (109 aa)) form the FAD-binding FR-type domain. 207–242 (EFESIGMIAGGSGITPMYQVIQDIASNPSDKTKVTL) provides a ligand contact to FAD.

This sequence belongs to the flavoprotein pyridine nucleotide cytochrome reductase family. FAD serves as cofactor.

The protein resides in the mitochondrion outer membrane. It carries out the reaction 2 Fe(III)-[cytochrome b5] + NADH = 2 Fe(II)-[cytochrome b5] + NAD(+) + H(+). Its function is as follows. May mediate the reduction of outer membrane cytochrome b5. The sequence is that of NADH-cytochrome b5 reductase 2 (MCR1) from Mycosarcoma maydis (Corn smut fungus).